A 257-amino-acid polypeptide reads, in one-letter code: 4-hydroxy-tetrahydrodipicolinate reductase (257 aa).

NAD(+) contacts are provided by residues 8-13 (GSTGRV), 90-92 (ATT), and 114-117 (ATNM). H146 functions as the Proton donor/acceptor in the catalytic mechanism. A (S)-2,3,4,5-tetrahydrodipicolinate-binding site is contributed by H147. K150 serves as the catalytic Proton donor. 156-157 (GT) contributes to the (S)-2,3,4,5-tetrahydrodipicolinate binding site.

It belongs to the DapB family.

The protein resides in the cytoplasm. It catalyses the reaction (S)-2,3,4,5-tetrahydrodipicolinate + NAD(+) + H2O = (2S,4S)-4-hydroxy-2,3,4,5-tetrahydrodipicolinate + NADH + H(+). The catalysed reaction is (S)-2,3,4,5-tetrahydrodipicolinate + NADP(+) + H2O = (2S,4S)-4-hydroxy-2,3,4,5-tetrahydrodipicolinate + NADPH + H(+). It participates in amino-acid biosynthesis; L-lysine biosynthesis via DAP pathway; (S)-tetrahydrodipicolinate from L-aspartate: step 4/4. Catalyzes the conversion of 4-hydroxy-tetrahydrodipicolinate (HTPA) to tetrahydrodipicolinate. The sequence is that of 4-hydroxy-tetrahydrodipicolinate reductase from Aliarcobacter butzleri (strain RM4018) (Arcobacter butzleri).